Consider the following 311-residue polypeptide: Ribosomal protein L11 methyltransferase (311 aa).

4 residues coordinate S-adenosyl-L-methionine: Thr162, Gly183, Asp205, and Asn248.

Belongs to the methyltransferase superfamily. PrmA family.

It is found in the cytoplasm. It carries out the reaction L-lysyl-[protein] + 3 S-adenosyl-L-methionine = N(6),N(6),N(6)-trimethyl-L-lysyl-[protein] + 3 S-adenosyl-L-homocysteine + 3 H(+). In terms of biological role, methylates ribosomal protein L11. The sequence is that of Ribosomal protein L11 methyltransferase from Bacillus pumilus (strain SAFR-032).